The following is a 102-amino-acid chain: ATP-dependent Clp protease adapter protein ClpS (102 aa).

This sequence belongs to the ClpS family. Binds to the N-terminal domain of the chaperone ClpA.

Its function is as follows. Involved in the modulation of the specificity of the ClpAP-mediated ATP-dependent protein degradation. The protein is ATP-dependent Clp protease adapter protein ClpS of Aromatoleum aromaticum (strain DSM 19018 / LMG 30748 / EbN1) (Azoarcus sp. (strain EbN1)).